The following is a 950-amino-acid chain: Protocadherin alpha-8 (950 aa).

Positions 1–29 (MVYHWRGDLGSWRLLLLLLLLAAWKVGSG) are cleaved as a signal peptide. 6 consecutive Cadherin domains span residues 30 to 133 (QLHY…PPVF), 157 to 242 (ASDA…APNF), 243 to 350 (EQSE…VPEI), 351 to 455 (ALTS…APAF), 456 to 565 (AQPE…APAL), and 581 to 678 (VPRS…APKA). Residues 30-697 (QLHYSVPEEA…GPEAALVDVN (668 aa)) lie on the Extracellular side of the membrane. Asn257 and Asn265 each carry an N-linked (GlcNAc...) asparagine glycan. Asn548 is a glycosylation site (N-linked (GlcNAc...) asparagine). The helical transmembrane segment at 698–718 (VYLIIAICAVSSLLVLTLLLY) threads the bilayer. Over 719–950 (TALRCSALPT…GNSTTDNSDQ (232 aa)) the chain is Cytoplasmic. PXXP repeat units follow at residues 774–777 (PCLP), 799–802 (PRQP), 832–835 (PGGP), 873–876 (PGNP), and 891–894 (PGSP). The tract at residues 774-894 (PCLPPDLGSV…PDKFIIPGSP (121 aa)) is 5 X 4 AA repeats of P-X-X-P. A disordered region spans residues 831–950 (GPGGPDQQWP…GNSTTDNSDQ (120 aa)). The span at 909–923 (DKSDFITFGKKEETK) shows a compositional bias: basic and acidic residues.

The protein resides in the cell membrane. Functionally, potential calcium-dependent cell-adhesion protein. May be involved in the establishment and maintenance of specific neuronal connections in the brain. In Pan troglodytes (Chimpanzee), this protein is Protocadherin alpha-8 (PCDHA8).